Consider the following 263-residue polypeptide: MSAEIIASIADVLTDNIPLTPISQGAEAVVFTSPVHPYLPKNRTDGDDKLYILKYRPEKKYRHPVIDKTLTKHRTLGESRLLAKLRLIDGLNVPKLIGCDPYHGCIWLEFLGEDLPNGHGFSNLKNFLWMNASDPYSDLVRDTMINVGKQIGLMHWNDYCHGDLTTSNIVLVRAGEDWQPYLIDFGLGSISTLVEDKGVDLYVLERAIISTHSSFANRYNLWVLEGFKSVFESHGKAGLGKYKDLIRRFEEVRLRGRKRSMIG.

Residues 16 to 263 (NIPLTPISQG…LRGRKRSMIG (248 aa)) form the Protein kinase domain. ATP is bound by residues 22 to 30 (ISQGAEAVV) and K54. The active-site Proton acceptor is the D163.

The protein belongs to the protein kinase superfamily. BUD32 family. As to quaternary structure, component of the EKC/KEOPS complex composed of at least BUD32, CGI121, GON7, KAE1 and PCC1; the whole complex dimerizes.

Its subcellular location is the cytoplasm. The protein resides in the nucleus. It localises to the chromosome. It is found in the telomere. It carries out the reaction L-seryl-[protein] + ATP = O-phospho-L-seryl-[protein] + ADP + H(+). The enzyme catalyses L-threonyl-[protein] + ATP = O-phospho-L-threonyl-[protein] + ADP + H(+). Functionally, component of the EKC/KEOPS complex that is required for the formation of a threonylcarbamoyl group on adenosine at position 37 (t(6)A37) in tRNAs that read codons beginning with adenine. The complex is probably involved in the transfer of the threonylcarbamoyl moiety of threonylcarbamoyl-AMP (TC-AMP) to the N6 group of A37. BUD32 has ATPase activity in the context of the EKC/KEOPS complex and likely plays a supporting role to the catalytic subunit KAE1. The EKC/KEOPS complex also promotes both telomere uncapping and telomere elongation. The complex is required for efficient recruitment of transcriptional coactivators. This is EKC/KEOPS complex subunit BUD32 (BUD32) from Kluyveromyces lactis (strain ATCC 8585 / CBS 2359 / DSM 70799 / NBRC 1267 / NRRL Y-1140 / WM37) (Yeast).